Reading from the N-terminus, the 197-residue chain is uncharacterized protein (197 aa).

This is an uncharacterized protein from Archaeoglobus fulgidus (strain ATCC 49558 / DSM 4304 / JCM 9628 / NBRC 100126 / VC-16).